The primary structure comprises 578 residues: Vitelline membrane-like protein (578 aa).

The first 21 residues, 1–21 (MCGRRLLFLAAFGCLLANAFS), serve as a signal peptide directing secretion. The interval 72 to 452 (QGYSAPAAPV…AAPSYSAPAS (381 aa)) is 45 X 8 AA approximate tandem repeats of [PS]-[AS]-Y-S-A-P-A-[AS]. Disordered regions lie at residues 133–442 (ASSS…YSAP) and 487–514 (SGSP…ASKS). One can recognise a VM domain in the interval 549–578 (SLPSPPCPKNYVFSCSSVFTPAPCSQGYGY).

As to quaternary structure, interacts with Vm26Aa and Vm26Ab; forms part of a disulfide-linked network within the vitelline membrane of stage 10 egg chambers. Becomes part of a disulfide-linked network including other vitelline membrane proteins, including Vm26Aa and Vm26Ab, during vitelline membrane biogenesis and maturation. Post-translationally, sulfated by pip; probably involved in embryo dorsal-ventral axis determination. Sulfation by pip may occur on covalently bound glycosaminoglycans. As to expression, secreted into the perivitelline space and becomes stably incorporated into the vitelline membrane (at protein level). Expressed throughout the follicle cell layer of stage 10 egg chambers.

Its subcellular location is the secreted. It localises to the extracellular space. The protein localises to the extracellular matrix. In terms of biological role, major early eggshell protein secreted by folicle cells into the perivitelline space and incorporated into the vitelline membrane. Localized sulfation by pip may be involved in embryo dorsal-ventral axis determination. This chain is Vitelline membrane-like protein, found in Drosophila melanogaster (Fruit fly).